The sequence spans 4299 residues: DNA-dependent protein kinase catalytic subunit (4299 aa).

A coiled-coil region spans residues 551–590 (KDLNSTIKKENNNNNNNKNKNNNNNQTLTKEEISKSIKKL). Disordered stretches follow at residues 557–577 (IKKENNNNNNNKNKNNNNNQT), 613–633 (DENDNNSNSNSNNNNNNDQDN), 878–917 (NSSDSTSGGDIDIDSGGSMGGGGVVPPPSSSSRHRKMKFK), and 1206–1230 (SSSKNNSNSNSNNNNNNNNNSEDGT). Low complexity-rich tracts occupy residues 562 to 575 (NNNNNNKNKNNNNN), 617 to 631 (NNSNSNSNNNNNNDQ), 878 to 893 (NSSDSTSGGDIDIDSG), and 1206 to 1226 (SSSKNNSNSNSNNNNNNNNNS). Residue Ser-2789 is modified to Phosphoserine; by autocatalysis. Residues Thr-2814 and Thr-2822 each carry the phosphothreonine; by autocatalysis modification. Residues 2832–2867 (SSSQSYGGTNNNTGSSQLSSSSSSSGSQSSSQNNSS) show a composition bias toward low complexity. Disordered stretches follow at residues 2832 to 2881 (SSSQ…PKLI) and 3535 to 3559 (TTSSSPSLSISSSSSPYSSTSSSSQ). Residues 3031 to 3707 (KIKDISLNSN…YFPFKISSEQ (677 aa)) form the FAT domain. The 340-residue stretch at 3887-4226 (FDTNVLVMGS…AKKKLELVNP (340 aa)) folds into the PI3K/PI4K catalytic domain. The G-loop stretch occupies residues 3893–3899 (VMGSLRK). Residues 4092 to 4100 (GIGDRHLEN) form a catalytic loop region. Residues 4112–4137 (GIDFGHAFGTATQFLPIPELMPFRLT) form an activation loop region. In terms of domain architecture, FATC spans 4267–4299 (VCSSVKEQIDCLIDQSTDPNILSRAWVGWNGAL).

This sequence belongs to the PI3/PI4-kinase family. DNAPK subfamily. Post-translationally, may be phosphorylated upon DNA damage. Could be autophosphorylated. Autophosphorylation induces a conformational change that leads to remodeling of the DNA-PK complex, requisite for efficient end processing and DNA repair. In terms of processing, autophosphorylated on Ser-2789, Thr-2814 and Thr-2822. Ser-2789 is a DNA damage-inducible phosphorylation site (inducible with ionizing radiation, IR).

Its subcellular location is the nucleus. The protein localises to the nucleolus. It carries out the reaction L-seryl-[protein] + ATP = O-phospho-L-seryl-[protein] + ADP + H(+). The enzyme catalyses L-threonyl-[protein] + ATP = O-phospho-L-threonyl-[protein] + ADP + H(+). Inhibited by wortmannin. Activity of the enzyme seems to be attenuated by autophosphorylation. Serine/threonine-protein kinase that acts as a molecular sensor for DNA damage. Is recruited to DNA ends by the Ku70/Ku80 heterodimer and is involved in DNA non-homologous end joining (NHEJ) required for double-strand break (DSB) repair and V(D)J recombination. This activity is only apparent when DNA damage is administered in G1 phase of the cell cycle. Required for efficient signaling of DNA double-stranded breaks via phosphorylation of H2AX during G1. This chain is DNA-dependent protein kinase catalytic subunit (dnapkcs), found in Dictyostelium discoideum (Social amoeba).